Reading from the N-terminus, the 463-residue chain is Hexose-6-phosphate:phosphate antiporter (463 aa).

Residues 1–24 (MLAFLNQVRKPTLDLPLDVRRKMW) are Cytoplasmic-facing. A helical membrane pass occupies residues 25-45 (FKPFMQSYLVVFIGYLTMYLI). The Periplasmic portion of the chain corresponds to 46 to 60 (RKNFNIAQNDMISTY). A helical membrane pass occupies residues 61–81 (GLSMTELGMIGLGFSITYGVG). Topologically, residues 82 to 96 (KTLVSYYADGKNTKQ) are cytoplasmic. Residues 97–117 (FLPFMLILSAICMLGFSASMG) traverse the membrane as a helical segment. At 118–122 (AGSTS) the chain is on the periplasmic side. Residues 123-143 (LFLMIAFYALSGFFQSTGGSC) traverse the membrane as a helical segment. Topologically, residues 144-159 (SYSTITKWTPRRKRGT) are cytoplasmic. The chain crosses the membrane as a helical span at residues 160 to 180 (FLGFWNISHNLGGAGAAGVAL). At 181 to 189 (FGANYLFDG) the chain is on the periplasmic side. The helical transmembrane segment at 190–210 (HVIGMFIFPSIIALIVGFIGL) threads the bilayer. Residues 211-259 (RFGSDSPESYGLGKAEELFGEEISEEDKETEENEMTKWQIFVEYVLKNK) are Cytoplasmic-facing. A helical membrane pass occupies residues 260–280 (VIWLLCFSNIFLYVVRIGIDQ). Over 281 to 297 (WSTVYAFQELKLSKEVA) the chain is Periplasmic. A helical transmembrane segment spans residues 298-318 (IQGFTLFEVGALVGTLLWGWL). The Cytoplasmic segment spans residues 319-326 (SDLANGRR). A helical membrane pass occupies residues 327-347 (ALVACVALALIIATLGVYQHA). Residues 348-357 (SNQYVYLASL) lie on the Periplasmic side of the membrane. The helical transmembrane segment at 358–378 (FALGFLVFGPQLLIGVAAVGF) threads the bilayer. The Cytoplasmic segment spans residues 379 to 382 (VPKK). The helical transmembrane segment at 383 to 403 (AIGAADGIKGTFAYLIGDSFA) threads the bilayer. Topologically, residues 404-425 (KLGLGMIADGTPVFGLTGWAGT) are periplasmic. Residues 426–446 (FAALDAAAIGCICLMAMVAVM) form a helical membrane-spanning segment. The Cytoplasmic segment spans residues 447–463 (EERKIRREKKIQQVNIA).

The protein belongs to the major facilitator superfamily. Organophosphate:Pi antiporter (OPA) (TC 2.A.1.4) family.

Its subcellular location is the cell inner membrane. Functionally, mediates the exchange of external hexose 6-phosphate and internal inorganic phosphate. This chain is Hexose-6-phosphate:phosphate antiporter (uhpT), found in Salmonella typhimurium (strain LT2 / SGSC1412 / ATCC 700720).